We begin with the raw amino-acid sequence, 396 residues long: Ribosomal RNA large subunit methyltransferase I (396 aa).

The PUA domain maps to 2–81; that stretch reads SVRLVLAKGR…ETIDIAFFTR (80 aa).

The protein belongs to the methyltransferase superfamily. RlmI family.

The protein resides in the cytoplasm. It carries out the reaction cytidine(1962) in 23S rRNA + S-adenosyl-L-methionine = 5-methylcytidine(1962) in 23S rRNA + S-adenosyl-L-homocysteine + H(+). In terms of biological role, specifically methylates the cytosine at position 1962 (m5C1962) of 23S rRNA. The protein is Ribosomal RNA large subunit methyltransferase I of Cronobacter sakazakii (strain ATCC BAA-894) (Enterobacter sakazakii).